We begin with the raw amino-acid sequence, 678 residues long: AAC-rich mRNA clone AAC4 protein (678 aa).

A compositionally biased stretch (low complexity) spans 55-73 (NNNNNNNNNNNNNNNNNNN). The tract at residues 55–75 (NNNNNNNNNNNNNNNNNNNTS) is disordered. The chain crosses the membrane as a helical span at residues 243–263 (IIPIYHEIILVLCNWLVVAFY). Over residues 318 to 346 (NNNNNNNNNNNNNNNNNNNNNNNNKTNNN) the composition is skewed to low complexity. The interval 318–347 (NNNNNNNNNNNNNNNNNNNNNNNNKTNNNQ) is disordered.

It localises to the membrane. The chain is AAC-rich mRNA clone AAC4 protein (AAC4) from Dictyostelium discoideum (Social amoeba).